The sequence spans 561 residues: MASNSHNNYNTPRRQNYDVPKAWEEDSLYENIDFLTQPAVSSDTSEDEEPLPLGRETGRGSRGSTRPKTPRGLVRPRQDADNPSSDEGFDWEPLESFTSQPGAFSFLEPPRLSSSNTASGLRSSCSDFTILGSSGENPTSHANLSEEEMYEEIPPLASNPSDERHPRQLSGAVAQGAIRKSPRKLKFKPAKFKGLSSSLLNPFTASDSGRRARRQTPTCQPGFTPIFQDLGEPHYVKACTVFFEGCMAAGKTTLLNFARQTLSDDEALTIPEPMRFWTEVYTNVLSQIVKINKECKPGKTSTTAELVSCQLKFATPLKTQSLFLQRSVKKDSEMQPVGPLDKWVIVDRHQLSALVVFPLVLMRRGMLSFSDFFNLLGMFEAHPGEVIALMSVNVEENFTRLKKRGRVCERHIDRDYIKEIKGSFNAAYCAWLFLQYFSIQTTMQICMGLSSLDEACATEGVCHTTASRIWNNSMLVTLSDIISQFSNDYTVQNVCYNFFSQLSTLKFVVIDLSAFRHDVPGAWGEFYMQVMKNGDIKTRVMDFTAIKALADTAHNTHASLD.

2 stretches are compositionally biased toward polar residues: residues 1–14 (MASN…TPRR) and 112–122 (LSSSNTASGLR). 2 disordered regions span residues 1 to 22 (MASN…VPKA) and 34 to 122 (FLTQ…SGLR). Residue 245-252 (GCMAAGKT) coordinates ATP. Residue Glu272 is the Proton acceptor of the active site. Residue Gln310 participates in substrate binding. Residue Arg400 participates in ATP binding. Arg406 contributes to the substrate binding site.

It belongs to the herpesviridae thymidine kinase family. In terms of assembly, homodimer.

The enzyme catalyses thymidine + ATP = dTMP + ADP + H(+). In terms of biological role, catalyzes the transfer of the gamma-phospho group of ATP to thymidine to generate dTMP in the salvage pathway of pyrimidine synthesis. The dTMP serves as a substrate for DNA polymerase during viral DNA replication. Allows the virus to be reactivated and to grow in non-proliferative cells lacking a high concentration of phosphorylated nucleic acid precursors. This chain is Thymidine kinase, found in Connochaetes taurinus (Blue wildebeest).